A 450-amino-acid polypeptide reads, in one-letter code: Phosphoglucosamine mutase (450 aa).

S97 functions as the Phosphoserine intermediate in the catalytic mechanism. Mg(2+)-binding residues include S97, D236, D238, and D240. S97 is subject to Phosphoserine.

Belongs to the phosphohexose mutase family. Mg(2+) is required as a cofactor. Post-translationally, activated by phosphorylation.

It catalyses the reaction alpha-D-glucosamine 1-phosphate = D-glucosamine 6-phosphate. Functionally, catalyzes the conversion of glucosamine-6-phosphate to glucosamine-1-phosphate. The protein is Phosphoglucosamine mutase of Prochlorococcus marinus (strain AS9601).